Consider the following 145-residue polypeptide: Hemoglobin subunit beta (145 aa).

The Globin domain occupies 1–145; it reads MLTAEEKAAV…VANALAHRYH (145 aa). At threonine 11 the chain carries Phosphothreonine. Phosphoserine is present on serine 43. Lysine 58 bears the N6-acetyllysine mark. Histidine 62 lines the heme b pocket. Position 81 is an N6-acetyllysine (lysine 81). Histidine 91 is a binding site for heme b. Cysteine 92 is subject to S-nitrosocysteine.

This sequence belongs to the globin family. As to quaternary structure, heterotetramer of two alpha chains and two beta chains. Red blood cells.

Its function is as follows. Involved in oxygen transport from the lung to the various peripheral tissues. The sequence is that of Hemoglobin subunit beta (HBB) from Bos gaurus frontalis (Domestic gayal).